The following is a 52-amino-acid chain: uncharacterized protein (52 aa).

Residues 3–46 (KIQLESSNQSVLKLEERRLNLTAEIERIYGQMDLKRKELENANL) are a coiled coil.

This is an uncharacterized protein from Dictyostelium discoideum (Social amoeba).